A 313-amino-acid chain; its full sequence is Proline-rich protein 3 (313 aa).

An N-terminal signal peptide occupies residues 1–22 (MAITRSSLAICLILSLVTITTA). Residues 27–312 (PSSPPVYKSP…GPKAAPATPK (286 aa)) are 35 X 5 AA approximate repeats. Tandem repeats lie at residues 30–34 (PPVYK), 35–39 (SPEHK), 40–43 (PTLP), 44–48 (SPVYT), 49–53 (PPVYK), 54–57 (PTLS), 58–62 (PPVYT), 64–67 (PTIP), 68–72 (PPVYT), 73–77 (PPVYK), 82–86 (PPVYT), 87–91 (KPTIP), 92–96 (PPVYT), 97–101 (PPVYK), 102–105 (PTLS), 106–110 (PPVYT), 111–115 (KPTIP), 116–120 (PPVYT), 121–125 (PPVYK), 126–131 (PTPVYT), 132–136 (KPTIP), 137–141 (PPVYT), 142–146 (PPVYK), 147–150 (PTPS), 151–155 (PPVYK), 157–163 (SPSYSSP), 164–168 (PPPYV), 169–174 (PKPTYT), 175–181 (PTTKPYV), 182–186 (PEILK), 187–229 (AVDG…VIYS), 258–262 (SPVET), 266–270 (PTNVN), 298–302 (PFYYT), and 308–312 (PATPK).

This sequence belongs to the plant proline-rich protein superfamily. ENOD12 family. As to expression, exclusively expressed in roots, particularly in root hairs-containing regions, and especially in root hairs.

The protein localises to the secreted. Its subcellular location is the cell wall. May contribute to cell wall structure in root hairs. This Arabidopsis thaliana (Mouse-ear cress) protein is Proline-rich protein 3 (PRP3).